Reading from the N-terminus, the 174-residue chain is Non-classical export protein 2 homolog 1 (174 aa).

Residues 1 to 7 are Cytoplasmic-facing; that stretch reads MLSAADN. The helical transmembrane segment at 8–28 threads the bilayer; the sequence is LVRIINAVFLIISIGLISGLI. Topologically, residues 29–41 are extracellular; that stretch reads GTQTKHSSRVNFC. A helical membrane pass occupies residues 42 to 62; the sequence is MFAAVYGLVTDSLYGFLANFW. At 63–69 the chain is on the cytoplasmic side; that stretch reads TSLTYPA. A helical transmembrane segment spans residues 70–90; the sequence is ILLVLDFLNFIFTFVAATALA. The Extracellular portion of the chain corresponds to 91 to 122; that stretch reads VGIRCHSCKNKTYLEQNKIIQGSSSRCHQSQA. The chain crosses the membrane as a helical span at residues 123-143; it reads AVAFFYFSCFLFLIKVTVATM. Over 144-174 the chain is Cytoplasmic; the sequence is GMMQNGGFGSNTGFSRRRARRQMGIPTISQV.

Belongs to the NCE102 family.

The protein localises to the cell membrane. Functionally, involved in membrane organization. Required for the formation of membrane compartments of CAN1 (MCCs), localization of CAN1 at the MCCs and subsequent invagination of the plasma membrane at the MCCs sites. Involved in eisosome organization and might act as a sensor of sphingolipids that regulates plasma membrane function. Involved in a novel pathway of export of proteins that lack a cleavable signal sequence. Non-classical export pathway also functions as an alternative clearance/detoxification pathway to eliminate damaged material, when the basic repair pathway is not sufficient. In Saccharomyces cerevisiae (strain ATCC 204508 / S288c) (Baker's yeast), this protein is Non-classical export protein 2 homolog 1 (FHN1).